A 686-amino-acid chain; its full sequence is Translation initiation factor IF-2 (686 aa).

Residues 53-105 (EKPSVADEFEVEEKVVRSKKNSNKKKKKGKGNEDKRQENFAGRQQTQTVETPD) form a disordered region. Over residues 69 to 81 (RSKKNSNKKKKKG) the composition is skewed to basic residues. Residues 188 to 357 (ERPAVVTIMG…LLVSEVEEYK (170 aa)) enclose the tr-type G domain. The G1 stretch occupies residues 197–204 (GHVDHGKT). Residue 197 to 204 (GHVDHGKT) coordinates GTP. Residues 222-226 (GITQH) are G2. Residues 243–246 (DTPG) are G3. GTP-binding positions include 243–247 (DTPGH) and 297–300 (NKMD). A G4 region spans residues 297–300 (NKMD). Residues 333-335 (SAI) form a G5 region.

It belongs to the TRAFAC class translation factor GTPase superfamily. Classic translation factor GTPase family. IF-2 subfamily.

The protein resides in the cytoplasm. Functionally, one of the essential components for the initiation of protein synthesis. Protects formylmethionyl-tRNA from spontaneous hydrolysis and promotes its binding to the 30S ribosomal subunits. Also involved in the hydrolysis of GTP during the formation of the 70S ribosomal complex. This is Translation initiation factor IF-2 from Bacillus cereus (strain ATCC 10987 / NRS 248).